The chain runs to 180 residues: MFPMVTGFINYGQQTIRAARYIGQSFIITLSHTNRLPVTIQYPYEKSIASERFRGRIHFEFDKCIACEVCVRVCPIDLPVVDWRLEKNIKKKQLLNYSIDFGFCIFCGNCVEYCPTNCLSMTEEYELSTYDRHELNYNQIALGRLPMSVIGDYTIQTVLNWTQIKIDKNKLLDSRTITNY.

4Fe-4S ferredoxin-type domains lie at 55–84 (GRIH…VDWR) and 95–124 (LNYS…MTEE). [4Fe-4S] cluster is bound by residues Cys-64, Cys-67, Cys-70, Cys-74, Cys-104, Cys-107, Cys-110, and Cys-114.

The protein belongs to the complex I 23 kDa subunit family. NDH is composed of at least 16 different subunits, 5 of which are encoded in the nucleus. It depends on [4Fe-4S] cluster as a cofactor.

The protein localises to the plastid. It is found in the chloroplast thylakoid membrane. The enzyme catalyses a plastoquinone + NADH + (n+1) H(+)(in) = a plastoquinol + NAD(+) + n H(+)(out). It carries out the reaction a plastoquinone + NADPH + (n+1) H(+)(in) = a plastoquinol + NADP(+) + n H(+)(out). In terms of biological role, NDH shuttles electrons from NAD(P)H:plastoquinone, via FMN and iron-sulfur (Fe-S) centers, to quinones in the photosynthetic chain and possibly in a chloroplast respiratory chain. The immediate electron acceptor for the enzyme in this species is believed to be plastoquinone. Couples the redox reaction to proton translocation, and thus conserves the redox energy in a proton gradient. This is NAD(P)H-quinone oxidoreductase subunit I, chloroplastic from Dioscorea elephantipes (Elephant's foot yam).